We begin with the raw amino-acid sequence, 83 residues long: Hepcidin (83 aa).

An N-terminal signal peptide occupies residues 1-23; the sequence is MALSTRTQAACLLLLLLASLSST. Residues 24-53 constitute a propeptide that is removed on maturation; sequence TYLHQQMRQTTELQPLHGEESRADIAIPMQ. Cystine bridges form between cysteine 65–cysteine 81, cysteine 68–cysteine 71, cysteine 69–cysteine 77, and cysteine 72–cysteine 80.

It belongs to the hepcidin family. In terms of assembly, interacts with SLC40A1; this interaction promotes SLC40A1 rapid ubiquitination. In terms of tissue distribution, highly expressed in the liver and to a much lesser extent in the heart. Secreted in blood.

Its subcellular location is the secreted. Liver-produced hormone that constitutes the main circulating regulator of iron absorption and distribution across tissues. Acts by promoting endocytosis and degradation of SLC40A1, leading to the retention of iron in iron-exporting cells and decreased flow of iron into plasma. Controls the major flows of iron into plasma: absorption of dietary iron in the intestine, recycling of iron by macrophages, which phagocytose old erythrocytes and other cells, and mobilization of stored iron from hepatocytes. The sequence is that of Hepcidin (Hamp) from Mus musculus (Mouse).